The following is a 399-amino-acid chain: Enoyl-[acyl-carrier-protein] reductase [NADH] (399 aa).

Residues 48-53 (GASTGY), 74-75 (FE), 111-112 (DA), and 139-140 (LA) contribute to the NAD(+) site. Y225 serves as a coordination point for substrate. Y235 functions as the Proton donor in the catalytic mechanism. NAD(+)-binding positions include K244 and 274–276 (VVT).

Belongs to the TER reductase family. In terms of assembly, monomer.

It catalyses the reaction a 2,3-saturated acyl-[ACP] + NAD(+) = a (2E)-enoyl-[ACP] + NADH + H(+). The protein operates within lipid metabolism; fatty acid biosynthesis. Functionally, involved in the final reduction of the elongation cycle of fatty acid synthesis (FAS II). Catalyzes the reduction of a carbon-carbon double bond in an enoyl moiety that is covalently linked to an acyl carrier protein (ACP). This is Enoyl-[acyl-carrier-protein] reductase [NADH] from Erwinia tasmaniensis (strain DSM 17950 / CFBP 7177 / CIP 109463 / NCPPB 4357 / Et1/99).